The following is a 130-amino-acid chain: T-cell receptor beta chain V region A20.2.25 (130 aa).

Positions 1 to 21 (MSCRLLLYVSLCLVETALMNT) are cleaved as a signal peptide. A v segment region spans residues 22 to 112 (KITQSPRYLI…DSAVYFCASS (91 aa)). Residues N36 and N75 are each glycosylated (N-linked (GlcNAc...) asparagine). Residues 113 to 115 (HGE) form a d segment region. The j segment stretch occupies residues 116-130 (NTEVFFGKGTTLTVV).

This is T-cell receptor beta chain V region A20.2.25 from Mus musculus (Mouse).